Reading from the N-terminus, the 330-residue chain is Malate dehydrogenase (330 aa).

12–18 (GAAGQIG) contributes to the NAD(+) binding site. Arginine 93 and arginine 99 together coordinate substrate. NAD(+) contacts are provided by residues asparagine 106, glutamine 113, and 130 to 132 (VGN). The substrate site is built by asparagine 132 and arginine 166. The active-site Proton acceptor is the histidine 191.

Belongs to the LDH/MDH superfamily. MDH type 2 family.

It carries out the reaction (S)-malate + NAD(+) = oxaloacetate + NADH + H(+). Functionally, catalyzes the reversible oxidation of malate to oxaloacetate. This chain is Malate dehydrogenase, found in Azoarcus sp. (strain BH72).